The primary structure comprises 465 residues: ATP synthase subunit beta (465 aa).

ATP is bound at residue 148 to 155; the sequence is GGAGVGKT.

It belongs to the ATPase alpha/beta chains family. F-type ATPases have 2 components, CF(1) - the catalytic core - and CF(0) - the membrane proton channel. CF(1) has five subunits: alpha(3), beta(3), gamma(1), delta(1), epsilon(1). CF(0) has three main subunits: a(1), b(2) and c(9-12). The alpha and beta chains form an alternating ring which encloses part of the gamma chain. CF(1) is attached to CF(0) by a central stalk formed by the gamma and epsilon chains, while a peripheral stalk is formed by the delta and b chains.

It localises to the cell inner membrane. The enzyme catalyses ATP + H2O + 4 H(+)(in) = ADP + phosphate + 5 H(+)(out). In terms of biological role, produces ATP from ADP in the presence of a proton gradient across the membrane. The catalytic sites are hosted primarily by the beta subunits. The sequence is that of ATP synthase subunit beta from Neisseria meningitidis serogroup B (strain ATCC BAA-335 / MC58).